The following is a 412-amino-acid chain: Shaggy-related protein kinase zeta (412 aa).

Positions 1–19 (MTSIPLGPPQPPSLAPQPP) are enriched in pro residues. The interval 1–33 (MTSIPLGPPQPPSLAPQPPHLHGGDSLKRRPDI) is disordered. Positions 22–33 (HGGDSLKRRPDI) are enriched in basic and acidic residues. Residue serine 26 is modified to Phosphoserine. Positions 72–356 (YMAERVVGTG…ALEACAHPFF (285 aa)) constitute a Protein kinase domain. Residues 78-86 (VGTGSFGIV) and lysine 101 contribute to the ATP site. Residue serine 127 is modified to Phosphoserine. Threonine 136 and threonine 137 each carry phosphothreonine. The active-site Proton acceptor is aspartate 197. Serine 219 is subject to Phosphoserine. Tyrosine 232 is subject to Phosphotyrosine. Serine 252 is subject to Phosphoserine. The residue at position 293 (threonine 293) is a Phosphothreonine. Position 342 is a phosphoserine (serine 342). Phosphothreonine is present on threonine 346.

Belongs to the protein kinase superfamily. CMGC Ser/Thr protein kinase family. GSK-3 subfamily. In terms of assembly, binds to KIB1. Interacts with beet curly top virus AL4/C4 and tomato golden mosaic virus AL4/AC4. In terms of processing, autophosphorylated mainly on threonine and serine residues.

The catalysed reaction is L-seryl-[protein] + ATP = O-phospho-L-seryl-[protein] + ADP + H(+). It carries out the reaction L-threonyl-[protein] + ATP = O-phospho-L-threonyl-[protein] + ADP + H(+). Functionally, may mediate extracellular signals to regulate transcription in differentiating cells. The protein is Shaggy-related protein kinase zeta (ASK6) of Arabidopsis thaliana (Mouse-ear cress).